A 460-amino-acid polypeptide reads, in one-letter code: Exodeoxyribonuclease 7 large subunit (460 aa).

Belongs to the XseA family. Heterooligomer composed of large and small subunits.

The protein localises to the cytoplasm. It carries out the reaction Exonucleolytic cleavage in either 5'- to 3'- or 3'- to 5'-direction to yield nucleoside 5'-phosphates.. In terms of biological role, bidirectionally degrades single-stranded DNA into large acid-insoluble oligonucleotides, which are then degraded further into small acid-soluble oligonucleotides. This Edwardsiella ictaluri (strain 93-146) protein is Exodeoxyribonuclease 7 large subunit.